A 120-amino-acid polypeptide reads, in one-letter code: Large ribosomal subunit protein uL18 (120 aa).

Belongs to the universal ribosomal protein uL18 family. Part of the 50S ribosomal subunit; part of the 5S rRNA/L5/L18/L25 subcomplex. Contacts the 5S and 23S rRNAs.

This is one of the proteins that bind and probably mediate the attachment of the 5S RNA into the large ribosomal subunit, where it forms part of the central protuberance. The chain is Large ribosomal subunit protein uL18 from Finegoldia magna (strain ATCC 29328 / DSM 20472 / WAL 2508) (Peptostreptococcus magnus).